The chain runs to 396 residues: Elongation factor Tu (396 aa).

The region spanning 10 to 206 is the tr-type G domain; it reads KPHVNVGTIG…ALDSYIPTPE (197 aa). Positions 19–26 are G1; the sequence is GHVDHGKT. 19–26 is a binding site for GTP; the sequence is GHVDHGKT. T26 contacts Mg(2+). Residues 60 to 64 form a G2 region; it reads GITIN. The G3 stretch occupies residues 81 to 84; sequence DCPG. Residues 81-85 and 136-139 each bind GTP; these read DCPGH and NKCD. The segment at 136-139 is G4; that stretch reads NKCD. Positions 174 to 176 are G5; the sequence is SAK.

It belongs to the TRAFAC class translation factor GTPase superfamily. Classic translation factor GTPase family. EF-Tu/EF-1A subfamily. In terms of assembly, monomer.

It localises to the cytoplasm. It catalyses the reaction GTP + H2O = GDP + phosphate + H(+). In terms of biological role, GTP hydrolase that promotes the GTP-dependent binding of aminoacyl-tRNA to the A-site of ribosomes during protein biosynthesis. The polypeptide is Elongation factor Tu (Ralstonia nicotianae (strain ATCC BAA-1114 / GMI1000) (Ralstonia solanacearum)).